Reading from the N-terminus, the 495-residue chain is MSSSPSRKNPRVLFVTSEVFPLCKTGGLGDVSAALPAALRELKADVRLLVPGYPSVLSGLKYKRKLAEFDLLPHFPPTTLFSSRLQINESVSLPLYVIHCPELYQRPGGIYLDDDGQDWPDNAQRFGLLSKMGALLASDASPLSWIPDIIHCNDWQSGLTPAYLHYHSGKKAASLMTLHNLAFQGCFPPDEVARLGLPPESFSVHGVEYYGNLSFLKAGIYYATRITTVSPTYAREIQHEPLGFGLQGLLAERSNAITGIINGIDNTVWNPATDPHIVKKYSSRNLAAKKINKLALQREMGLEENETIPLFAGISRLSYQKGYDILLQVAPMLADLPAQLVLLGKGDQSLEKQLVMLAQTNPARIAVRIDYDEALSHRINASADCFLMPSRFEPCGLNQMYSQRYGTPPIVHTTGGLIDTVTDLAPDTPAGESASGFHFHEMTADAFMNGIGRAIDAYYNTRLWKTLQHNGMRKDFSWRSSALAYLSIYSLLMQR.

Residue K24 participates in ADP-alpha-D-glucose binding.

The protein belongs to the glycosyltransferase 1 family. Bacterial/plant glycogen synthase subfamily.

The enzyme catalyses [(1-&gt;4)-alpha-D-glucosyl](n) + ADP-alpha-D-glucose = [(1-&gt;4)-alpha-D-glucosyl](n+1) + ADP + H(+). The protein operates within glycan biosynthesis; glycogen biosynthesis. Synthesizes alpha-1,4-glucan chains using ADP-glucose. This is Glycogen synthase from Nitrosomonas europaea (strain ATCC 19718 / CIP 103999 / KCTC 2705 / NBRC 14298).